Consider the following 257-residue polypeptide: Type III pantothenate kinase (257 aa).

An ATP-binding site is contributed by 6 to 13 (DAGNTNIV). Residues Tyr-100 and 107–110 (GADR) contribute to the substrate site. The Proton acceptor role is filled by Asp-109. Asp-129 is a K(+) binding site. Thr-132 is a binding site for ATP. Residue Thr-184 participates in substrate binding.

It belongs to the type III pantothenate kinase family. As to quaternary structure, homodimer. NH4(+) serves as cofactor. Requires K(+) as cofactor.

It localises to the cytoplasm. It carries out the reaction (R)-pantothenate + ATP = (R)-4'-phosphopantothenate + ADP + H(+). It functions in the pathway cofactor biosynthesis; coenzyme A biosynthesis; CoA from (R)-pantothenate: step 1/5. In terms of biological role, catalyzes the phosphorylation of pantothenate (Pan), the first step in CoA biosynthesis. The protein is Type III pantothenate kinase of Clostridium botulinum (strain Alaska E43 / Type E3).